Reading from the N-terminus, the 167-residue chain is CGG triplet repeat-binding protein 1 (167 aa).

S56 carries the phosphoserine modification. The Nuclear localization signal motif lies at 80 to 84 (RKKQR). A Phosphoserine modification is found at S164.

Ubiquitous. Highly expressed in placenta, thymus, lymph nodes, cerebellum and cerebral cortex. Low expression in other regions of the brain.

Its subcellular location is the nucleus. Functionally, binds to nonmethylated 5'-d(CGG)(n)-3' trinucleotide repeats in the FMR1 promoter. May play a role in regulating FMR1 promoter. The sequence is that of CGG triplet repeat-binding protein 1 (CGGBP1) from Homo sapiens (Human).